Reading from the N-terminus, the 243-residue chain is Phomoidride biosynthesis cluster protein B (243 aa).

This sequence belongs to the tstB family.

Phosphatidylethanolamine-binding protein; part of the gene cluster that mediates the biosynthesis of the antihypercholesterolemic agents phomoidrides which are dimeric anhydrides. Within the pathway, tstB is not essential for dimerization and its function has still to be determined. The pathway begins with the highly reducing polyketide synthase tstA that catalyzes the formation of a C12-fatty acyl-ACP, starting from one acetate and 5 malonate units. The hydrolase tstM is involved in the release of the C12-fatty acyl chain from phiA. The alkylcitrate synthase (ACS) tstJ and the alkylcitrate dehydratase (ACDH) tstI then give rise to decarboxylated monomeric anhydrides by coupling the C12-fatty acyl chain with oxalacetic acid. The cyclase tstC is responsible for the dimerization of the monomeric anhydrides which leads to the production of prephomoidride that contains the characteristic bicyclo[4.3.1]deca-1,6-diene system of phomoidrides. Iterative oxidation catalyzed by the alpha-ketoglutarate-dependent dioxygenase tstK produced then phomoidride A. Finally, the methyltransferase tstE converts phomoidride A to phomoidride B via an acetalization reaction. The phosphatidylethanolamine-binding protein tstB and tstN are not essential for dimerization and their functions have still to be determined. The protein is Phomoidride biosynthesis cluster protein B of Talaromyces stipitatus (strain ATCC 10500 / CBS 375.48 / QM 6759 / NRRL 1006) (Penicillium stipitatum).